Consider the following 204-residue polypeptide: Ricin B-like lectin R40G3 (204 aa).

A Ricin B-type lectin domain is found at 54 to 200 (TVKVYCRANP…CEGDNQRWKI (147 aa)).

In terms of tissue distribution, expressed in shoots and lamina.

In terms of biological role, lectin which binds carbohydrates in vitro. Interacts through its lectin domain with glycan structures containing specific motifs. This is Ricin B-like lectin R40G3 from Oryza sativa subsp. japonica (Rice).